A 306-amino-acid polypeptide reads, in one-letter code: Aspartate carbamoyltransferase catalytic subunit (306 aa).

Positions 56 and 57 each coordinate carbamoyl phosphate. Lys-84 is a binding site for L-aspartate. Carbamoyl phosphate is bound by residues Arg-106, His-136, and Gln-139. The L-aspartate site is built by Arg-169 and Arg-221. Carbamoyl phosphate contacts are provided by Ala-262 and Pro-263.

Belongs to the aspartate/ornithine carbamoyltransferase superfamily. ATCase family. In terms of assembly, heterododecamer (2C3:3R2) of six catalytic PyrB chains organized as two trimers (C3), and six regulatory PyrI chains organized as three dimers (R2).

It carries out the reaction carbamoyl phosphate + L-aspartate = N-carbamoyl-L-aspartate + phosphate + H(+). It functions in the pathway pyrimidine metabolism; UMP biosynthesis via de novo pathway; (S)-dihydroorotate from bicarbonate: step 2/3. In terms of biological role, catalyzes the condensation of carbamoyl phosphate and aspartate to form carbamoyl aspartate and inorganic phosphate, the committed step in the de novo pyrimidine nucleotide biosynthesis pathway. This Streptococcus gordonii (strain Challis / ATCC 35105 / BCRC 15272 / CH1 / DL1 / V288) protein is Aspartate carbamoyltransferase catalytic subunit.